We begin with the raw amino-acid sequence, 494 residues long: Probable malate:quinone oxidoreductase (494 aa).

The protein belongs to the MQO family. The cofactor is FAD.

It catalyses the reaction (S)-malate + a quinone = a quinol + oxaloacetate. Its pathway is carbohydrate metabolism; tricarboxylic acid cycle; oxaloacetate from (S)-malate (quinone route): step 1/1. The polypeptide is Probable malate:quinone oxidoreductase (Micrococcus luteus (strain ATCC 4698 / DSM 20030 / JCM 1464 / CCM 169 / CCUG 5858 / IAM 1056 / NBRC 3333 / NCIMB 9278 / NCTC 2665 / VKM Ac-2230) (Micrococcus lysodeikticus)).